The following is a 424-amino-acid chain: Histidinol dehydrogenase homolog (424 aa).

The Zn(2+) site is built by Gln250 and His253. Residues Glu318 and His319 each act as proton acceptor in the active site. 2 residues coordinate Zn(2+): Asp352 and His411.

This sequence belongs to the histidinol dehydrogenase family. Requires Zn(2+) as cofactor.

The polypeptide is Histidinol dehydrogenase homolog (Shouchella clausii (strain KSM-K16) (Alkalihalobacillus clausii)).